We begin with the raw amino-acid sequence, 456 residues long: Glutamate--tRNA ligase 1 (456 aa).

The 'HIGH' region signature appears at 9–19 (PSPTGQIHIGN). The short motif at 250 to 254 (GLSKR) is the 'KMSKS' region element. Position 253 (Lys-253) interacts with ATP.

The protein belongs to the class-I aminoacyl-tRNA synthetase family. Glutamate--tRNA ligase type 1 subfamily. As to quaternary structure, monomer.

Its subcellular location is the cytoplasm. The enzyme catalyses tRNA(Glu) + L-glutamate + ATP = L-glutamyl-tRNA(Glu) + AMP + diphosphate. Catalyzes the attachment of glutamate to tRNA(Glu) in a two-step reaction: glutamate is first activated by ATP to form Glu-AMP and then transferred to the acceptor end of tRNA(Glu). The sequence is that of Glutamate--tRNA ligase 1 from Chelativorans sp. (strain BNC1).